The chain runs to 315 residues: ATP synthase gamma chain (315 aa).

This sequence belongs to the ATPase gamma chain family. As to quaternary structure, F-type ATPases have 2 components, CF(1) - the catalytic core - and CF(0) - the membrane proton channel. CF(1) has five subunits: alpha(3), beta(3), gamma(1), delta(1), epsilon(1). CF(0) has three main subunits: a, b and c.

The protein resides in the cellular thylakoid membrane. In terms of biological role, produces ATP from ADP in the presence of a proton gradient across the membrane. The gamma chain is believed to be important in regulating ATPase activity and the flow of protons through the CF(0) complex. This is ATP synthase gamma chain from Synechococcus sp. (strain RCC307).